Reading from the N-terminus, the 566-residue chain is Serine/threonine-protein kinase PknE (566 aa).

The Cytoplasmic segment spans residues 1-337; the sequence is MDGTAESREG…PLPRSARQPW (337 aa). Phosphoserine; by autocatalysis is present on Ser-7. Thr-11 bears the Phosphothreonine; by autocatalysis mark. In terms of domain architecture, Protein kinase spans 16 to 275; it reads YRLRRLVGRG…DLSAAAHAAL (260 aa). Residues 22 to 30 and Lys-45 contribute to the ATP site; that span reads VGRGGMGDV. 2 positions are modified to phosphothreonine; by autocatalysis: Thr-50 and Thr-59. Asp-139 acts as the Proton acceptor in catalysis. Phosphothreonine; by autocatalysis is present on residues Thr-170, Thr-175, and Thr-178. The segment at 296 to 330 is disordered; it reads PVPSTHPVSPGTRWPQPTPWAGGAPPWGPPSSPLP. A helical transmembrane segment spans residues 338–358; it reads LWVGVAVAVVVALAGGLGIAL. Residues 359 to 566 lie on the Extracellular side of the membrane; that stretch reads AHPWRSSGPR…DPSWLARLIG (208 aa).

Belongs to the protein kinase superfamily. Ser/Thr protein kinase family. As to quaternary structure, homodimer. In terms of processing, autophosphorylated on serine and threonine residues. Dephosphorylated by PstP.

Its subcellular location is the cell membrane. It catalyses the reaction L-seryl-[protein] + ATP = O-phospho-L-seryl-[protein] + ADP + H(+). It carries out the reaction L-threonyl-[protein] + ATP = O-phospho-L-threonyl-[protein] + ADP + H(+). In terms of biological role, a serine/threonine-protein kinase, acts on HupB in vitro, modifying at least 2 Ser and 8 Thr residues. Important for bacterial survival in the host during infection. The protein is Serine/threonine-protein kinase PknE of Mycobacterium tuberculosis (strain ATCC 25177 / H37Ra).